We begin with the raw amino-acid sequence, 488 residues long: N-succinylglutamate 5-semialdehyde dehydrogenase (488 aa).

Residue Gly-221–Gly-226 participates in NAD(+) binding. Active-site residues include Glu-244 and Cys-278.

This sequence belongs to the aldehyde dehydrogenase family. AstD subfamily.

The enzyme catalyses N-succinyl-L-glutamate 5-semialdehyde + NAD(+) + H2O = N-succinyl-L-glutamate + NADH + 2 H(+). The protein operates within amino-acid degradation; L-arginine degradation via AST pathway; L-glutamate and succinate from L-arginine: step 4/5. Catalyzes the NAD-dependent reduction of succinylglutamate semialdehyde into succinylglutamate. This is N-succinylglutamate 5-semialdehyde dehydrogenase from Pseudomonas savastanoi pv. phaseolicola (strain 1448A / Race 6) (Pseudomonas syringae pv. phaseolicola (strain 1448A / Race 6)).